The chain runs to 517 residues: GMP synthase [glutamine-hydrolyzing] (517 aa).

The 191-residue stretch at 9–199 folds into the Glutamine amidotransferase type-1 domain; that stretch reads RILILDFGSQ…VLNACGCEGL (191 aa). The active-site Nucleophile is the C86. Residues H173 and E175 contribute to the active site. Positions 200-392 constitute a GMPS ATP-PPase domain; sequence WTSASIIEDA…LGLPYNMLYR (193 aa). ATP is bound at residue 227–233; that stretch reads SGGVDSS.

In terms of assembly, homodimer.

The enzyme catalyses XMP + L-glutamine + ATP + H2O = GMP + L-glutamate + AMP + diphosphate + 2 H(+). It functions in the pathway purine metabolism; GMP biosynthesis; GMP from XMP (L-Gln route): step 1/1. Functionally, catalyzes the synthesis of GMP from XMP. This is GMP synthase [glutamine-hydrolyzing] from Vibrio atlanticus (strain LGP32) (Vibrio splendidus (strain Mel32)).